We begin with the raw amino-acid sequence, 89 residues long: Small ribosomal subunit protein uS15 (89 aa).

Belongs to the universal ribosomal protein uS15 family. As to quaternary structure, part of the 30S ribosomal subunit. Forms a bridge to the 50S subunit in the 70S ribosome, contacting the 23S rRNA.

Its function is as follows. One of the primary rRNA binding proteins, it binds directly to 16S rRNA where it helps nucleate assembly of the platform of the 30S subunit by binding and bridging several RNA helices of the 16S rRNA. Forms an intersubunit bridge (bridge B4) with the 23S rRNA of the 50S subunit in the ribosome. This Salinispora tropica (strain ATCC BAA-916 / DSM 44818 / JCM 13857 / NBRC 105044 / CNB-440) protein is Small ribosomal subunit protein uS15.